The chain runs to 131 residues: Small ribosomal subunit protein uS8 (131 aa).

This sequence belongs to the universal ribosomal protein uS8 family. In terms of assembly, part of the 30S ribosomal subunit. Contacts proteins S5 and S12.

Its function is as follows. One of the primary rRNA binding proteins, it binds directly to 16S rRNA central domain where it helps coordinate assembly of the platform of the 30S subunit. The protein is Small ribosomal subunit protein uS8 of Novosphingobium aromaticivorans (strain ATCC 700278 / DSM 12444 / CCUG 56034 / CIP 105152 / NBRC 16084 / F199).